The following is a 121-amino-acid chain: Large ribosomal subunit protein uL18 (121 aa).

This sequence belongs to the universal ribosomal protein uL18 family. Part of the 50S ribosomal subunit; part of the 5S rRNA/L5/L18/L25 subcomplex. Contacts the 5S and 23S rRNAs.

Its function is as follows. This is one of the proteins that bind and probably mediate the attachment of the 5S RNA into the large ribosomal subunit, where it forms part of the central protuberance. The protein is Large ribosomal subunit protein uL18 of Bdellovibrio bacteriovorus (strain ATCC 15356 / DSM 50701 / NCIMB 9529 / HD100).